The sequence spans 249 residues: Aquaporin TIP4-3 (249 aa).

Transmembrane regions (helical) follow at residues 20-40 (GVLG…GAAM) and 56-76 (TAVA…GFHI). The short motif at 82 to 84 (NPA) is the NPA 1 element. The next 3 helical transmembrane spans lie at 100 to 122 (SSLY…RWLT), 141 to 161 (GVVA…ATIL), and 169 to 189 (GAGP…GAAL). The NPA 2 motif lies at 195–197 (NPA). The helical transmembrane segment at 214-234 (VYWVGPLAGGPLAVLVYECCF) threads the bilayer.

This sequence belongs to the MIP/aquaporin (TC 1.A.8) family. TIP (TC 1.A.8.10) subfamily.

The protein resides in the vacuole membrane. Functionally, aquaporins facilitate the transport of water and small neutral solutes across cell membranes. The polypeptide is Aquaporin TIP4-3 (TIP4-3) (Zea mays (Maize)).